The sequence spans 258 residues: Ribosome maturation factor RimP (258 aa).

Disordered regions lie at residues Pro-48–Ala-88 and Ile-212–Asp-258. Residues Lys-215–Gly-224 are compositionally biased toward basic residues.

It belongs to the RimP family.

It is found in the cytoplasm. Its function is as follows. Required for maturation of 30S ribosomal subunits. This chain is Ribosome maturation factor RimP, found in Desulfovibrio desulfuricans (strain ATCC 27774 / DSM 6949 / MB).